The chain runs to 701 residues: Elongation factor G (701 aa).

Positions 10 to 286 (NKVRNIGIMA…AVIDYLPSPL (277 aa)) constitute a tr-type G domain. GTP-binding positions include 19–26 (AHIDAGKT), 83–87 (DTPGH), and 137–140 (NKMD).

It belongs to the TRAFAC class translation factor GTPase superfamily. Classic translation factor GTPase family. EF-G/EF-2 subfamily.

The protein localises to the cytoplasm. Its function is as follows. Catalyzes the GTP-dependent ribosomal translocation step during translation elongation. During this step, the ribosome changes from the pre-translocational (PRE) to the post-translocational (POST) state as the newly formed A-site-bound peptidyl-tRNA and P-site-bound deacylated tRNA move to the P and E sites, respectively. Catalyzes the coordinated movement of the two tRNA molecules, the mRNA and conformational changes in the ribosome. The chain is Elongation factor G from Mycobacteroides abscessus (strain ATCC 19977 / DSM 44196 / CCUG 20993 / CIP 104536 / JCM 13569 / NCTC 13031 / TMC 1543 / L948) (Mycobacterium abscessus).